A 263-amino-acid chain; its full sequence is S-acyl fatty acid synthase thioesterase, medium chain (263 aa).

Met1 bears the N-acetylmethionine mark. Residues Ser101 and His237 contribute to the active site. Residues 262 to 263 (LT) are important for interaction with FASN.

The protein belongs to the thioesterase family. Interacts (via C-terminus) with FASN.

It localises to the cytoplasm. The protein localises to the cytosol. It carries out the reaction (9Z)-octadecenoyl-[ACP] + H2O = (9Z)-octadecenoate + holo-[ACP] + H(+). The catalysed reaction is decanoyl-CoA + H2O = decanoate + CoA + H(+). It catalyses the reaction dodecanoyl-CoA + H2O = dodecanoate + CoA + H(+). The enzyme catalyses tetradecanoyl-CoA + H2O = tetradecanoate + CoA + H(+). It carries out the reaction hexadecanoyl-CoA + H2O = hexadecanoate + CoA + H(+). In terms of biological role, contributes to the release of free fatty acids from fatty acid synthase (FASN). Has broad substrate specificity, giving rise to a range of free fatty acids with chain lengths between 10 and 16 carbon atoms (C10 - C16). This Rattus norvegicus (Rat) protein is S-acyl fatty acid synthase thioesterase, medium chain.